The sequence spans 93 residues: Small ribosomal subunit protein bS16 (93 aa).

This sequence belongs to the bacterial ribosomal protein bS16 family.

The polypeptide is Small ribosomal subunit protein bS16 (Dictyoglomus turgidum (strain DSM 6724 / Z-1310)).